The following is a 1282-amino-acid chain: Myosin-1 (1282 aa).

A disordered region spans residues M1–V30. Positions A44–D723 constitute a Myosin motor domain. G137–T144 serves as a coordination point for ATP. At S365 the chain carries Phosphoserine. Positions V412–A494 are actin-binding. The segment at L569–D590 is disordered. IQ domains follow at residues H727 to C747 and A748 to Q773. Positions R781–A977 constitute a TH1 domain. Positions S973–E1073 are disordered. Positions P1029–A1058 are enriched in low complexity. Residues P1059–A1068 are compositionally biased toward pro residues. Residues P1074–Q1135 form the SH3 domain. The interval A1237–R1282 is disordered. Low complexity predominate over residues G1252–G1269.

The protein belongs to the TRAFAC class myosin-kinesin ATPase superfamily. Myosin family. Post-translationally, phosphorylation of the TEDS site (Ser-365) is required for the polarization of the actin cytoskeleton. Phosphorylation probably activates the myosin-I ATPase activity.

The protein resides in the cytoplasm. It localises to the cytoskeleton. It is found in the actin patch. Functionally, type-I myosin implicated in the organization of the actin cytoskeleton. Required for proper actin cytoskeleton polarization. At the cell cortex, assembles in patch-like structures together with proteins from the actin-polymerizing machinery and promotes actin assembly. Functions as actin nucleation-promoting factor (NPF) for the Arp2/3 complex. In Mycosarcoma maydis (Corn smut fungus), this protein is Myosin-1 (myo1).